The chain runs to 205 residues: Large ribosomal subunit protein uL18 (205 aa).

This sequence belongs to the universal ribosomal protein uL18 family. Part of the 50S ribosomal subunit. Contacts the 5S and 23S rRNAs.

This is one of the proteins that bind and probably mediate the attachment of the 5S RNA into the large ribosomal subunit, where it forms part of the central protuberance. This Haloquadratum walsbyi (strain DSM 16790 / HBSQ001) protein is Large ribosomal subunit protein uL18.